We begin with the raw amino-acid sequence, 204 residues long: Large ribosomal subunit protein eL15 (204 aa).

This sequence belongs to the eukaryotic ribosomal protein eL15 family. In terms of assembly, component of the large ribosomal subunit.

It is found in the cytoplasm. Component of the large ribosomal subunit. The ribosome is a large ribonucleoprotein complex responsible for the synthesis of proteins in the cell. This chain is Large ribosomal subunit protein eL15 (rpl15), found in Megalobrama amblycephala (Chinese blunt snout bream).